Here is a 444-residue protein sequence, read N- to C-terminus: N-succinylarginine dihydrolase (444 aa).

Substrate is bound by residues 19–28 (SGLSVGNIAS), Asn-110, and 137–138 (HR). Residue Glu-174 is part of the active site. Arg-214 contacts substrate. The active site involves His-250. Substrate-binding residues include Asp-252 and Asn-362. The Nucleophile role is filled by Cys-368.

The protein belongs to the succinylarginine dihydrolase family. In terms of assembly, homodimer.

It catalyses the reaction N(2)-succinyl-L-arginine + 2 H2O + 2 H(+) = N(2)-succinyl-L-ornithine + 2 NH4(+) + CO2. It participates in amino-acid degradation; L-arginine degradation via AST pathway; L-glutamate and succinate from L-arginine: step 2/5. Functionally, catalyzes the hydrolysis of N(2)-succinylarginine into N(2)-succinylornithine, ammonia and CO(2). This chain is N-succinylarginine dihydrolase, found in Aliivibrio fischeri (strain ATCC 700601 / ES114) (Vibrio fischeri).